Reading from the N-terminus, the 256-residue chain is Small ribosomal subunit protein uS2 (256 aa).

Belongs to the universal ribosomal protein uS2 family.

The chain is Small ribosomal subunit protein uS2 from Streptococcus equi subsp. equi (strain 4047).